The primary structure comprises 611 residues: Chaperone protein HscA (611 aa).

Belongs to the heat shock protein 70 family.

Functionally, chaperone involved in the maturation of iron-sulfur cluster-containing proteins. Has a low intrinsic ATPase activity which is markedly stimulated by HscB. Involved in the maturation of IscU. The sequence is that of Chaperone protein HscA from Buchnera aphidicola subsp. Acyrthosiphon pisum (strain 5A).